We begin with the raw amino-acid sequence, 470 residues long: MGLGRVTQVMGPVIDVRFEHNEVPEINNALVVDVERDEGTVSLTLEVALQLGDDVVRTIAMDSTDGVKRGTEVRDSGDSISVPVGDATLGRVFNVLGDTIDLDEKLDTSVKRDPIHREAPAFDQLSTKVEILETGIKVIDLLAPYIKGGKIGLFGGAGVGKTVLIQELINNIAQEHGGISVFAGVGERTREGNDLYYEMSDSGVIKKTAMVFGQMNEPPGARMRVALSGLTMAEHFRDVQGQDVLLFIDNIFRFTQAGSEVSALLGRMPSAVGYQPTLATEMGQLQERITSTTKGSVTSIQAVFVPADDYTDPAPAAVFAHLDATTNLERKLTEMGIYPAVDPLASTSRALDPTIVGQDHYEIARDVQSTLQKYRELQDIIAILGMDELSEEDKQTVERARRIQFFLSQNFHVAEQFTGQKGSYVPVQKTVEGFKAILDGEYDHIPEDAFRLVGSMEEVIAKAKDMGVEV.

155-162 (GGAGVGKT) lines the ATP pocket.

This sequence belongs to the ATPase alpha/beta chains family. F-type ATPases have 2 components, CF(1) - the catalytic core - and CF(0) - the membrane proton channel. CF(1) has five subunits: alpha(3), beta(3), gamma(1), delta(1), epsilon(1). CF(0) has three main subunits: a(1), b(2) and c(9-12). The alpha and beta chains form an alternating ring which encloses part of the gamma chain. CF(1) is attached to CF(0) by a central stalk formed by the gamma and epsilon chains, while a peripheral stalk is formed by the delta and b chains.

It is found in the cell membrane. It carries out the reaction ATP + H2O + 4 H(+)(in) = ADP + phosphate + 5 H(+)(out). In terms of biological role, produces ATP from ADP in the presence of a proton gradient across the membrane. The catalytic sites are hosted primarily by the beta subunits. The chain is ATP synthase subunit beta from Staphylococcus saprophyticus subsp. saprophyticus (strain ATCC 15305 / DSM 20229 / NCIMB 8711 / NCTC 7292 / S-41).